The following is a 368-amino-acid chain: Aspartate-semialdehyde dehydrogenase (368 aa).

NADP(+) is bound by residues 10 to 13, 37 to 38, and Gln72; these read RGMV and TS. Arg101 is a binding site for phosphate. Cys134 acts as the Acyl-thioester intermediate in catalysis. NADP(+) contacts are provided by residues 160–161 and Pro191; that span reads SG. A substrate-binding site is contributed by Glu239. Residue Lys242 participates in phosphate binding. Arg266 contacts substrate. The Proton acceptor role is filled by His273. An NADP(+)-binding site is contributed by Gln349.

Belongs to the aspartate-semialdehyde dehydrogenase family. Homodimer.

The enzyme catalyses L-aspartate 4-semialdehyde + phosphate + NADP(+) = 4-phospho-L-aspartate + NADPH + H(+). The protein operates within amino-acid biosynthesis; L-lysine biosynthesis via DAP pathway; (S)-tetrahydrodipicolinate from L-aspartate: step 2/4. It functions in the pathway amino-acid biosynthesis; L-methionine biosynthesis via de novo pathway; L-homoserine from L-aspartate: step 2/3. Its pathway is amino-acid biosynthesis; L-threonine biosynthesis; L-threonine from L-aspartate: step 2/5. Catalyzes the NADPH-dependent formation of L-aspartate-semialdehyde (L-ASA) by the reductive dephosphorylation of L-aspartyl-4-phosphate. This Azotobacter vinelandii protein is Aspartate-semialdehyde dehydrogenase.